The chain runs to 119 residues: Ribonuclease P protein component (119 aa).

Belongs to the RnpA family. Consists of a catalytic RNA component (M1 or rnpB) and a protein subunit.

It carries out the reaction Endonucleolytic cleavage of RNA, removing 5'-extranucleotides from tRNA precursor.. In terms of biological role, RNaseP catalyzes the removal of the 5'-leader sequence from pre-tRNA to produce the mature 5'-terminus. It can also cleave other RNA substrates such as 4.5S RNA. The protein component plays an auxiliary but essential role in vivo by binding to the 5'-leader sequence and broadening the substrate specificity of the ribozyme. The polypeptide is Ribonuclease P protein component (Mycobacterium avium (strain 104)).